We begin with the raw amino-acid sequence, 79 residues long: Acyl carrier protein (79 aa).

The 76-residue stretch at 2 to 77 folds into the Carrier domain; the sequence is ENIEQRVKKI…QAIDYVTAHL (76 aa). Ser37 is modified (O-(pantetheine 4'-phosphoryl)serine).

The protein belongs to the acyl carrier protein (ACP) family. 4'-phosphopantetheine is transferred from CoA to a specific serine of apo-ACP by AcpS. This modification is essential for activity because fatty acids are bound in thioester linkage to the sulfhydryl of the prosthetic group.

It localises to the cytoplasm. The protein operates within lipid metabolism; fatty acid biosynthesis. In terms of biological role, carrier of the growing fatty acid chain in fatty acid biosynthesis. The sequence is that of Acyl carrier protein from Laribacter hongkongensis (strain HLHK9).